The chain runs to 611 residues: MCGIVGAVAERNITAILLEGLKRLEYRGYDSAGVAVFTNEGVLERRRRSGKVSELEQALAGEPLIGRLGIAHTRWATHGAPCERNAHPHFSADELAVVHNGIIENHEALREQLKSLGYVFVSDTDTEVIVHLLHHKLKDTPDLAVALKSAVKELHGAYGLAVINAAQPDRLLAARSGSPLVIGVGMGENFLASDQLALRQVTDRFMYLEEGDIAEIRRDSVQIWTVDGLPVVREVVQYHEGAEAADKGEYRHFMLKEIHEQPKVVQRTLEGRLGQHQVLVHAFGPQAAELFAKVRNVQIVACGTSYHAGMVARYWLEGLAGIPCQVEVASEFRYRKVVVQPDTLFVSISQSGETADTLAALRNAKELGFLASLAICNVGISSLVRESDLTLLTQAGPEIGVASTKAFTTQLVALLLLTLSLGQVKGSLEEGVEAQLVEELRRLPTRLGEALAMDGTIEKVAELFAEKHHTLFLGRGAQFPVAMEGALKLKEISYIHAEAYPAGELKHGPLALVDADMPVVTVAPNNELLEKLKSNLQEVRARGGELIVFADEQAGMKNGEGTHVIAMPHIIDALAPILYTIPLQLLSYYVAVLKGTDVDQPRNLAKSVTVE.

Cysteine 2 (nucleophile; for GATase activity) is an active-site residue. One can recognise a Glutamine amidotransferase type-2 domain in the interval 2–219 (CGIVGAVAER…EGDIAEIRRD (218 aa)). SIS domains lie at 287 to 427 (AAEL…VKGS) and 460 to 601 (VAEL…VDQP). Catalysis depends on lysine 606, which acts as the For Fru-6P isomerization activity.

As to quaternary structure, homodimer.

The protein localises to the cytoplasm. The enzyme catalyses D-fructose 6-phosphate + L-glutamine = D-glucosamine 6-phosphate + L-glutamate. Catalyzes the first step in hexosamine metabolism, converting fructose-6P into glucosamine-6P using glutamine as a nitrogen source. In Pseudomonas syringae pv. tomato (strain ATCC BAA-871 / DC3000), this protein is Glutamine--fructose-6-phosphate aminotransferase [isomerizing].